The chain runs to 598 residues: Vanadium-dependent bromoperoxidase (598 aa).

F361, Q363, D365, D368, and Q370 together coordinate Ca(2+). Vanadate is bound by residues K400 and R408. H480 is a catalytic residue. Residues S485, G486, H487, R547, and H553 each coordinate vanadate. The active site involves H487.

It belongs to the vanadium-dependent haloperoxidase family. Homododecamer. Ca(2+) serves as cofactor. Requires vanadate as cofactor.

It catalyses the reaction RH + Br(-) + H2O2 = RBr + 2 H2O.. Its function is as follows. Catalyzes the halogenation of organic substrates in the presence of hydrogen peroxide. This Corallina pilulifera (Red coralline alga) protein is Vanadium-dependent bromoperoxidase.